The chain runs to 180 residues: Glycoprotein Xg (180 aa).

The first 21 residues, 1-21 (MESWWGLPCLAFLCFLMHARG), serve as a signal peptide directing secretion. Over 22-142 (QRDFDLADAL…GNPEGNMVAK (121 aa)) the chain is Extracellular. A disordered region spans residues 28–133 (ADALDDPEPT…HGGDHHSTYG (106 aa)). Residues 47 to 57 (KPKPPYYPQPE) are compositionally biased toward pro residues. Residues 143-163 (IVSPIVSVVVVTLLGAAASYF) traverse the membrane as a helical segment. Residues 164-180 (KLNNRRNCFRTHEPENV) are Cytoplasmic-facing.

The protein belongs to the CD99 family. Post-translationally, O-glycosylated. As to expression, expressed in erythroid tissues, including thymus, bone marrow and fetal liver, and in several nonerythroid tissues, such as heart, placenta, skeletal muscle, thyroid and trachea, as well as in skin fibroblasts. Expression is low or undetectable in other tissues.

The protein resides in the cell membrane. This is Glycoprotein Xg (XG) from Homo sapiens (Human).